A 208-amino-acid polypeptide reads, in one-letter code: Uracil phosphoribosyltransferase (208 aa).

Residues R78, R103, and D130–S138 each bind 5-phospho-alpha-D-ribose 1-diphosphate. Uracil-binding positions include I193 and G198 to A200. D199 is a 5-phospho-alpha-D-ribose 1-diphosphate binding site.

The protein belongs to the UPRTase family. The cofactor is Mg(2+).

The catalysed reaction is UMP + diphosphate = 5-phospho-alpha-D-ribose 1-diphosphate + uracil. The protein operates within pyrimidine metabolism; UMP biosynthesis via salvage pathway; UMP from uracil: step 1/1. Allosterically activated by GTP. Functionally, catalyzes the conversion of uracil and 5-phospho-alpha-D-ribose 1-diphosphate (PRPP) to UMP and diphosphate. This is Uracil phosphoribosyltransferase from Yersinia enterocolitica serotype O:8 / biotype 1B (strain NCTC 13174 / 8081).